The following is a 241-amino-acid chain: Small ribosomal subunit protein uS3 (241 aa).

One can recognise a KH type-2 domain in the interval 39–109; the sequence is IRQHVEKNLS…QIRINVIEVS (71 aa). A disordered region spans residues 215–241; that stretch reads EQAMAAPAPTPRKKRRPQQFEDRSNEE. Positions 232–241 are enriched in basic and acidic residues; sequence QQFEDRSNEE.

This sequence belongs to the universal ribosomal protein uS3 family. Part of the 30S ribosomal subunit. Forms a tight complex with proteins S10 and S14.

Binds the lower part of the 30S subunit head. Binds mRNA in the 70S ribosome, positioning it for translation. This chain is Small ribosomal subunit protein uS3, found in Crocosphaera subtropica (strain ATCC 51142 / BH68) (Cyanothece sp. (strain ATCC 51142)).